A 401-amino-acid polypeptide reads, in one-letter code: MKTLWKHCHIASMAHGKYSIIENAAIVTSGALIEWIGPETELAEPEHDNCIDLGGAWVTPGLIDCHTHTVFGGNRSGEFEQRLQGVSYAEIAAAGGGIASTVRATRAASEDELYASAERRLRHLLKDGVTTVEMKSGYGLDLENERKILRVIRRLGNTQPVTVRATCLAAHALPPEYADRAADYINHICNDMLPALAAEGLVDAVDAFCEYLAFSPAQVEQVFISAGQLALPVKLHAEQLSSLGGSSLAAHYKALSADHLEFMTEDDAVAMAAAGTVAVLLPGAFYFLRETQLPPMEALRKHGVPIAISTDLNPGTSPGLSLRLMLNMACTLFRMTPEEALAGVTFNAAKALGMSATHGSLEVGKVADFVAWDIERPADLAYWLGGDLDKRIVRHGVESSI.

The Fe(3+) site is built by His-66 and His-68. Positions 66 and 68 each coordinate Zn(2+). Residues Arg-75, Tyr-138, and His-171 each contribute to the 4-imidazolone-5-propanoate site. Tyr-138 serves as a coordination point for N-formimidoyl-L-glutamate. Position 236 (His-236) interacts with Fe(3+). Zn(2+) is bound at residue His-236. Position 239 (Gln-239) interacts with 4-imidazolone-5-propanoate. Fe(3+) is bound at residue Asp-311. Asp-311 contributes to the Zn(2+) binding site. N-formimidoyl-L-glutamate contacts are provided by Asn-313 and Gly-315. Thr-316 is a binding site for 4-imidazolone-5-propanoate.

This sequence belongs to the metallo-dependent hydrolases superfamily. HutI family. Requires Zn(2+) as cofactor. Fe(3+) is required as a cofactor.

It localises to the cytoplasm. It catalyses the reaction 4-imidazolone-5-propanoate + H2O = N-formimidoyl-L-glutamate. Its pathway is amino-acid degradation; L-histidine degradation into L-glutamate; N-formimidoyl-L-glutamate from L-histidine: step 3/3. Its function is as follows. Catalyzes the hydrolytic cleavage of the carbon-nitrogen bond in imidazolone-5-propanoate to yield N-formimidoyl-L-glutamate. It is the third step in the universal histidine degradation pathway. In Pseudomonas savastanoi pv. phaseolicola (strain 1448A / Race 6) (Pseudomonas syringae pv. phaseolicola (strain 1448A / Race 6)), this protein is Imidazolonepropionase.